Reading from the N-terminus, the 303-residue chain is Digeranylgeranylglyceryl phosphate synthase (303 aa).

The next 7 membrane-spanning stretches (helical) occupy residues 23–43 (VLGV…AAIA), 88–108 (LALA…PLTG), 130–150 (LPGN…GSLA), 164–184 (TIPI…VKGV), 206–228 (FALR…AAPL), 232–254 (GYAF…AACL), and 272–292 (VAMF…PVFY).

This sequence belongs to the UbiA prenyltransferase family. DGGGP synthase subfamily. The cofactor is Mg(2+).

It localises to the cell membrane. The enzyme catalyses sn-3-O-(geranylgeranyl)glycerol 1-phosphate + (2E,6E,10E)-geranylgeranyl diphosphate = 2,3-bis-O-(geranylgeranyl)-sn-glycerol 1-phosphate + diphosphate. Its pathway is membrane lipid metabolism; glycerophospholipid metabolism. Prenyltransferase that catalyzes the transfer of the geranylgeranyl moiety of geranylgeranyl diphosphate (GGPP) to the C2 hydroxyl of (S)-3-O-geranylgeranylglyceryl phosphate (GGGP). This reaction is the second ether-bond-formation step in the biosynthesis of archaeal membrane lipids. This chain is Digeranylgeranylglyceryl phosphate synthase, found in Ignicoccus hospitalis (strain KIN4/I / DSM 18386 / JCM 14125).